The sequence spans 479 residues: MSQVDAEGVVDGLRRTYISGKTKSYEWRVSQLKALLKITTHHDKEVVEALRADLKKPEHEAYVHEIFMVSNACKSALKELHQWMKPQKVKTSLATYPSSAEIVSEPLGVVLVITAWNYPFLLALDPMIGAIAAGNCVVLKPSEIAPATSALLAKLLNQYVDTSAIRVVEGAVPEMQALLDQRWDKIFYTGSSKVGQIVLSSAAKHLTPVVLELGGKCPTVVDANIDLKVAARRIISWKWSGNSGQTCISPDYIITTEENAPKLVDAIKCELESFYGKDPLKSQDMSSIINERQFERMTGLLDDKKVSDKIVYGGQSDKSNLKIAPTILLDVSEDSSVMSEEIFGPLLPIITVGKIEECYKIIASKPKPLAAYLFTNDKKRTEEFVSNVSAGGITINDIALHFLEPRLPFGGVGESGMGSYHGKFSFDAFSHKKSVLKRSFGGEVAARYPPYAPWKLHFMEAILQGDIFGLLKAWLGWSS.

190-195 (GSSKVG) contributes to the NAD(+) binding site. The active-site Proton acceptor is Glu-212. Cys-247 acts as the Nucleophile in catalysis.

Belongs to the aldehyde dehydrogenase family.

The protein resides in the plastid. It localises to the amyloplast. The protein localises to the chloroplast. The catalysed reaction is an aldehyde + NAD(+) + H2O = a carboxylate + NADH + 2 H(+). Its function is as follows. Oxidizes nonanal, propionaldehyde and acetaldehyde in vitro, in the following decreasing order of reactivity: nonanal, propionaldehyde, acetaldehyde. The polypeptide is Aldehyde dehydrogenase (ALDH) (Craterostigma plantagineum (Blue gem)).